A 194-amino-acid chain; its full sequence is Large ribosomal subunit protein uL6x (194 aa).

A Phosphothreonine modification is found at threonine 75.

This sequence belongs to the universal ribosomal protein uL6 family.

This Arabidopsis thaliana (Mouse-ear cress) protein is Large ribosomal subunit protein uL6x (RPL9D).